The following is a 207-amino-acid chain: Early nodulin-like protein 11 (207 aa).

Positions 1–24 are cleaved as a signal peptide; it reads MVSLISIVSVVFLLFTTFYHFGEA. The 106-residue stretch at 25-130 folds into the Phytocyanin domain; sequence RIINVGGSLD…GEKVTVVVQS (106 aa). Asn-43 carries an N-linked (GlcNAc...) asparagine glycan. The cysteines at positions 83 and 118 are disulfide-linked. Residues 129 to 179 form a disordered region; that stretch reads QSPNHPKPGPAAVTPTLPPKPSTTPAAPAPAPPTPSPKSSTSTMAPAPAPA. Over residues 144–164 the composition is skewed to pro residues; sequence TLPPKPSTTPAAPAPAPPTPS. A compositionally biased stretch (low complexity) spans 165 to 179; that stretch reads PKSSTSTMAPAPAPA. The GPI-anchor amidated serine moiety is linked to residue Ser-181. Positions 182–207 are cleaved as a propeptide — removed in mature form; it reads SAVGLVAGNGIFWASTLVAVIGLAFA.

This sequence belongs to the early nodulin-like (ENODL) family. Confined to flowers and siliques.

It is found in the cell membrane. Its function is as follows. May act as a carbohydrate transporter. Required, together with ENODL11, ENODL12, ENODL13, ENODL14 and ENODL15, for male-female communication and pollen tube reception and burst at the synergid cell surface of the female gametophyte. The polypeptide is Early nodulin-like protein 11 (Arabidopsis thaliana (Mouse-ear cress)).